Here is a 343-residue protein sequence, read N- to C-terminus: Dihydroorotase (343 aa).

The Zn(2+) site is built by histidine 14 and histidine 16. Residues histidine 16–arginine 18 and asparagine 42 each bind substrate. Lysine 97, histidine 136, histidine 170, and aspartate 242 together coordinate Zn(2+). Lysine 97 is modified (N6-carboxylysine). Position 136 (histidine 136) interacts with substrate. Aspartate 242 is an active-site residue. Residues histidine 246 and alanine 258 each coordinate substrate.

This sequence belongs to the metallo-dependent hydrolases superfamily. DHOase family. Class II DHOase subfamily. In terms of assembly, homodimer. Zn(2+) is required as a cofactor.

It catalyses the reaction (S)-dihydroorotate + H2O = N-carbamoyl-L-aspartate + H(+). The protein operates within pyrimidine metabolism; UMP biosynthesis via de novo pathway; (S)-dihydroorotate from bicarbonate: step 3/3. Catalyzes the reversible cyclization of carbamoyl aspartate to dihydroorotate. This is Dihydroorotase from Helicobacter hepaticus (strain ATCC 51449 / 3B1).